A 130-amino-acid polypeptide reads, in one-letter code: HTH-type transcriptional regulator KmtR (130 aa).

The region spanning 10–104 (LPDDQVCLVV…DAVFNAEHAG (95 aa)) is the HTH arsR-type domain. The segment at residues 44-67 (VNELAEQVGKPAPSVSQHLAKLRM) is a DNA-binding region (H-T-H motif). Residues 110–130 (HHRAAGGLQSVAKASATKDVG) are disordered.

Binding to DNA is inhibited by nickel and cobalt ions. In terms of biological role, represses expression of Rv2025c and its own expression. Acts by binding to the promoter regions. The sequence is that of HTH-type transcriptional regulator KmtR (kmtR) from Mycobacterium tuberculosis (strain ATCC 25618 / H37Rv).